The following is a 386-amino-acid chain: Alanine racemase (386 aa).

Lysine 48 serves as the catalytic Proton acceptor; specific for D-alanine. Lysine 48 carries the N6-(pyridoxal phosphate)lysine modification. Arginine 147 contributes to the substrate binding site. Tyrosine 279 functions as the Proton acceptor; specific for L-alanine in the catalytic mechanism. Methionine 327 contacts substrate.

It belongs to the alanine racemase family. Pyridoxal 5'-phosphate is required as a cofactor.

The enzyme catalyses L-alanine = D-alanine. It participates in amino-acid biosynthesis; D-alanine biosynthesis; D-alanine from L-alanine: step 1/1. In terms of biological role, catalyzes the interconversion of L-alanine and D-alanine. May also act on other amino acids. This chain is Alanine racemase (alr), found in Prochlorococcus marinus (strain SARG / CCMP1375 / SS120).